We begin with the raw amino-acid sequence, 376 residues long: Chlorophyll synthase, chloroplastic (376 aa).

The transit peptide at 1–47 (MATSHLLAAASSTAASSATFRPPLLSLRSPPPSSLRLNRRRHFQVVR) directs the protein to the chloroplast. Residues 48 to 69 (AAETDKETKANAPEKAPAGGSS) are disordered. A run of 8 helical transmembrane segments spans residues 95-115 (PVTW…SGNF), 171-191 (VITQ…LLDV), 197-217 (FPII…YSAP), 230-250 (FALG…LFGT), 255-275 (IVVL…VNDF), 300-320 (WICV…LFSS), 325-345 (YALA…QYFL), and 355-375 (YQAS…LATS).

It belongs to the UbiA prenyltransferase family. Chlorophyll synthase subfamily.

The protein localises to the plastid. It localises to the chloroplast membrane. It carries out the reaction phytyl diphosphate + chlorophyllide a + H(+) = chlorophyll a + diphosphate. Functionally, involved in one of the last steps of the biosynthesis of chlorophyll a. This Oryza sativa subsp. japonica (Rice) protein is Chlorophyll synthase, chloroplastic (CHLG).